Here is a 374-residue protein sequence, read N- to C-terminus: Negative elongation factor E (374 aa).

Residues 7-36 (GLSEEEEALQKKFNKLKKKKKALLALKKQS) adopt a coiled-coil conformation. Residues 30–43 (LALKKQSSSSTASQ) show a composition bias toward low complexity. Positions 30–58 (LALKKQSSSSTASQGGVKRSLSEQPVVDT) are disordered. At Ser-51 the chain carries Phosphoserine. Lys-78 is covalently cross-linked (Glycyl lysine isopeptide (Lys-Gly) (interchain with G-Cter in SUMO1); alternate). A Glycyl lysine isopeptide (Lys-Gly) (interchain with G-Cter in SUMO2); alternate cross-link involves residue Lys-78. The segment at 79 to 252 (AETKNSGFKR…SDSFPERRAP (174 aa)) is disordered. Residue Lys-82 forms a Glycyl lysine isopeptide (Lys-Gly) (interchain with G-Cter in SUMO2) linkage. Residues 90-101 (RTLEGKLKDPEK) show a composition bias toward basic and acidic residues. Residues Ser-113 and Ser-115 each carry the phosphoserine modification. Position 122 is a polyADP-ribosyl glutamic acid (Glu-122). Phosphoserine is present on residues Ser-131 and Ser-139. Position 151 is a polyADP-ribosyl glutamic acid (Glu-151). The residue at position 165 (Ser-165) is a Phosphoserine. A PolyADP-ribosyl glutamic acid modification is found at Glu-172. Residues Ser-179, Ser-181, Ser-185, and Ser-187 each carry the phosphoserine modification. 27 repeat units span residues 184–185 (RS), 186–187 (RS), 188–189 (RD), 190–191 (RS), 192–193 (RE), 194–195 (RN), 196–197 (RD), 198–199 (RD), 200–201 (RD), 202–203 (RD), 204–205 (RE), 206–207 (RD), 208–209 (RE), 210–211 (RD), 212–213 (RD), 214–215 (RD), 216–217 (RD), 218–219 (RE), 220–221 (RD), 222–223 (RD), 224–225 (RD), 226–227 (RD), 228–229 (RD), 230–231 (RD), 232–233 (RE), 234–235 (RD), and 236–237 (RE). The 27 X 2 AA approximate tandem repeats of R-[DSNE] stretch occupies residues 184–237 (RSRSRDRSRERNRDRDRDRDRERDRERDRDRDRDRERDRDRDRDRDRDRERDRE). Positions 186-250 (RSRDRSRERN…RRSDSFPERR (65 aa)) are enriched in basic and acidic residues. Ser-191 carries the post-translational modification Phosphoserine. Phosphoserine is present on residues Ser-243 and Ser-245. The 71-residue stretch at 256–326 (NTLYVYGEDM…VQLKVSIARK (71 aa)) folds into the RRM domain. Thr-266 and Thr-268 each carry phosphothreonine. Phosphoserine is present on residues Ser-275 and Ser-347. Glu-368 carries the polyADP-ribosyl glutamic acid modification.

The protein belongs to the RRM NELF-E family. As to quaternary structure, the NELF complex is composed of NELFA, NELFB, NELFCD and NELFE. Interacts with NELFB. In terms of processing, phosphorylated by the P-TEFb complex at sites next to its RNA recognition motif, promoting its release from chromatin. Sumoylated. Post-translationally, poly-ADP-ribosylated by PARP1, thereby preventing RNA-binding and relieving transcription pausing.

It localises to the nucleus. It is found in the chromosome. In terms of biological role, essential component of the NELF complex, a complex that negatively regulates the elongation of transcription by RNA polymerase II. The NELF complex, which acts via an association with the DSIF complex and causes transcriptional pausing, is counteracted by the P-TEFb kinase complex. Provides the strongest RNA binding activity of the NELF complex and may initially recruit the NELF complex to RNA. The polypeptide is Negative elongation factor E (NELFE) (Bos taurus (Bovine)).